A 250-amino-acid polypeptide reads, in one-letter code: MTITEIRNLLQGEVSSEQLEELRADERKGVQKLLISYEKRQAKRAQAVAQFQDRFSYEKKFWQKSQLVAGVDEVGRGPLAGPVVTAAVILPHNFDLIDVNDSKKLSPKKRKELFPKILAKAVSVSVGLANNDVIDRINIYEADRLAMAHAVQGLKVKPDALLVDAMNVPLNIPQVKLIHGDAKSNSIAAASIVAKVFRDNLMDAYGEVYPEYDFKHNAGYGTREHMEALKKYGPTPIHRRSFAPVSEYEK.

Residues 66 to 250 (QLVAGVDEVG…SFAPVSEYEK (185 aa)) enclose the RNase H type-2 domain. Residues Asp72, Glu73, and Asp164 each contribute to the a divalent metal cation site.

It belongs to the RNase HII family. The cofactor is Mn(2+). Requires Mg(2+) as cofactor.

The protein localises to the cytoplasm. It carries out the reaction Endonucleolytic cleavage to 5'-phosphomonoester.. In terms of biological role, endonuclease that specifically degrades the RNA of RNA-DNA hybrids. In Lactobacillus gasseri (strain ATCC 33323 / DSM 20243 / BCRC 14619 / CIP 102991 / JCM 1131 / KCTC 3163 / NCIMB 11718 / NCTC 13722 / AM63), this protein is Ribonuclease HII.